The sequence spans 336 residues: Foldase protein PrsA (336 aa).

A signal peptide spans Met1–Ala22. Residue Cys23 is the site of N-palmitoyl cysteine attachment. Cys23 carries S-diacylglycerol cysteine lipidation. One can recognise a PpiC domain in the interval Pro194–Ser286.

It belongs to the PrsA family.

The protein localises to the cell membrane. The enzyme catalyses [protein]-peptidylproline (omega=180) = [protein]-peptidylproline (omega=0). In terms of biological role, plays a major role in protein secretion by helping the post-translocational extracellular folding of several secreted proteins. The sequence is that of Foldase protein PrsA from Clostridium botulinum (strain Langeland / NCTC 10281 / Type F).